A 780-amino-acid polypeptide reads, in one-letter code: Potassium/sodium hyperpolarization-activated cyclic nucleotide-gated channel 3 (780 aa).

The interval 1 to 47 (MEEEARPAVGDGEAATPARETPPAAPAQARAASGGVPESAPEPKRRQ) is disordered. At 1 to 96 (MEEEARPAVG…PYSDFRFYWD (96 aa)) the chain is on the cytoplasmic side. The span at 13 to 32 (EAATPARETPPAAPAQARAA) shows a compositional bias: low complexity. An involved in subunit assembly region spans residues 45-90 (RRQLGTLLQPTVNKFSLRVFGSHKAVEIEQERVKSAGAWIIHPYSD). Residues 97-117 (LIMLLLMVGNLIVLPVGITFF) form a helical membrane-spanning segment. Topologically, residues 118-123 (KEENSP) are extracellular. A helical transmembrane segment spans residues 124–144 (PWIVFNVLSDTFFLLDLVLNF). Over 145–170 (RTGIVVEEGAEILLAPRAIRTRYLRT) the chain is Cytoplasmic. The chain crosses the membrane as a helical span at residues 171–191 (WFLVDLISSIPVDYIFLVVEL). The Extracellular portion of the chain corresponds to 192–200 (EPRLDAEVY). The chain crosses the membrane as a helical; Voltage-sensor span at residues 201–221 (KTARALRIVRFTKILSLLRLL). The Cytoplasmic portion of the chain corresponds to 222 to 252 (RLSRLIRYMHQWEEIFHMTYDLASAVVRIFN). The helical transmembrane segment at 253 to 273 (LIGMMLLLCHWDGCLQFLVPM) threads the bilayer. At 274–296 (LQDFPSDCWVSMNRMVNHSWGRQ) the chain is on the extracellular side. Asn-290 carries an N-linked (GlcNAc...) asparagine glycan. The pore-forming intramembrane region spans 297 to 318 (YSHALFKAMSHMLCIGYGQQAP). Over 319 to 328 (VGMPDVWLTM) the chain is Extracellular. A helical transmembrane segment spans residues 329–349 (LSMIVGATCYAMFIGHATALI). The Cytoplasmic segment spans residues 350–780 (QSLDSSRRQY…PRGPQISANM (431 aa)). Residues 353–780 (DSSRRQYQEK…PRGPQISANM (428 aa)) are interaction with KCTD3. 3',5'-cyclic AMP-binding residues include Gly-491, Glu-492, Cys-494, Arg-501, Thr-502, Arg-542, and Arg-545. Positions 549 to 569 (KNSILQRKRSEPSPGSSSGGV) are disordered. Position 634 is a phosphoserine (Ser-634). Residues 687-698 (ASLSRTGRSQVS) show a composition bias toward polar residues. A disordered region spans residues 687-780 (ASLSRTGRSQ…PRGPQISANM (94 aa)).

Belongs to the potassium channel HCN family. In terms of assembly, homotetramer. The potassium channel is composed of a homo- or heterotetrameric complex of pore-forming subunits. Interacts with HCN1. Interacts with KCTD3; this interaction increases cell surface expression and current density of this channel. Interacts with PEX5L.

The protein resides in the cell membrane. It catalyses the reaction K(+)(in) = K(+)(out). It carries out the reaction Na(+)(in) = Na(+)(out). Inhibited by Cs(1+) and ivabradine. Unlike HCN2 and HCN4, HCN3 is insensitive to cyclic nucleotides, such as cAMP or cGMP. This lack of sensitivity of HCN3, despite harboring a functional cyclic nucleotide-binding domain (CNBD), may be explained by its shorter C-terminal sequence, which may alter the normal autoinhibition of the channel. Phosphatidylinositol-4,5-bisphosphate (PIP(2)) shifts HCN3 activation to more depolarized potentials and accelerated activation kinetics. Hyperpolarization-activated ion channel that are permeable to sodium and potassium ions, with an about 3:1 preference for potassium ions. Contributes to the native pacemaker currents in heart (If) and in neurons (Ih). In particular, plays a pivotal role in maintaining excitability and promoting rhythmic burst firing within hypothalamic nuclei. Exerts a significant influence on the configuration of the cardiac action potential waveform. Does not appear to play a prominent role in the processing of acute, neuropathic, or inflammatory pain. This is Potassium/sodium hyperpolarization-activated cyclic nucleotide-gated channel 3 (Hcn3) from Rattus norvegicus (Rat).